A 474-amino-acid polypeptide reads, in one-letter code: Bifunctional protein GlmU (474 aa).

The segment at 1–232 (MSALDVIIMA…ALQVAGVNSP (232 aa)) is pyrophosphorylase. Residues Lys-23, Gln-78, 83-84 (GT), 105-107 (SGD), Gly-142, Glu-157, and Asn-230 contribute to the UDP-N-acetyl-alpha-D-glucosamine site. Position 107 (Asp-107) interacts with Mg(2+). Asn-230 is a Mg(2+) binding site. A linker region spans residues 233–253 (LQLAELERAHQLAQARALMEQ). The N-acetyltransferase stretch occupies residues 254 to 474 (GVRLADPARF…WQRPAKLPKA (221 aa)). The UDP-N-acetyl-alpha-D-glucosamine site is built by Arg-349 and Lys-367. Residue His-379 is the Proton acceptor of the active site. Positions 382 and 393 each coordinate UDP-N-acetyl-alpha-D-glucosamine. Residues Ala-396, 402-403 (NY), Ser-421, Gly-439, and Arg-456 each bind acetyl-CoA. Positions 454–474 (VARGKQVTKENWQRPAKLPKA) are disordered.

It in the N-terminal section; belongs to the N-acetylglucosamine-1-phosphate uridyltransferase family. The protein in the C-terminal section; belongs to the transferase hexapeptide repeat family. In terms of assembly, homotrimer. Mg(2+) is required as a cofactor.

The protein resides in the cytoplasm. The catalysed reaction is alpha-D-glucosamine 1-phosphate + acetyl-CoA = N-acetyl-alpha-D-glucosamine 1-phosphate + CoA + H(+). The enzyme catalyses N-acetyl-alpha-D-glucosamine 1-phosphate + UTP + H(+) = UDP-N-acetyl-alpha-D-glucosamine + diphosphate. It functions in the pathway nucleotide-sugar biosynthesis; UDP-N-acetyl-alpha-D-glucosamine biosynthesis; N-acetyl-alpha-D-glucosamine 1-phosphate from alpha-D-glucosamine 6-phosphate (route II): step 2/2. It participates in nucleotide-sugar biosynthesis; UDP-N-acetyl-alpha-D-glucosamine biosynthesis; UDP-N-acetyl-alpha-D-glucosamine from N-acetyl-alpha-D-glucosamine 1-phosphate: step 1/1. The protein operates within bacterial outer membrane biogenesis; LPS lipid A biosynthesis. Its function is as follows. Catalyzes the last two sequential reactions in the de novo biosynthetic pathway for UDP-N-acetylglucosamine (UDP-GlcNAc). The C-terminal domain catalyzes the transfer of acetyl group from acetyl coenzyme A to glucosamine-1-phosphate (GlcN-1-P) to produce N-acetylglucosamine-1-phosphate (GlcNAc-1-P), which is converted into UDP-GlcNAc by the transfer of uridine 5-monophosphate (from uridine 5-triphosphate), a reaction catalyzed by the N-terminal domain. The polypeptide is Bifunctional protein GlmU (Paracidovorax citrulli (strain AAC00-1) (Acidovorax citrulli)).